Reading from the N-terminus, the 130-residue chain is Small ribosomal subunit protein uS11 (130 aa).

The protein belongs to the universal ribosomal protein uS11 family. In terms of assembly, part of the 30S ribosomal subunit. Interacts with proteins S7 and S18. Binds to IF-3.

Located on the platform of the 30S subunit, it bridges several disparate RNA helices of the 16S rRNA. Forms part of the Shine-Dalgarno cleft in the 70S ribosome. In Shewanella frigidimarina (strain NCIMB 400), this protein is Small ribosomal subunit protein uS11.